The primary structure comprises 195 residues: Nucleoside triphosphate pyrophosphatase (195 aa).

Asp-70 functions as the Proton acceptor in the catalytic mechanism.

The protein belongs to the Maf family. A divalent metal cation serves as cofactor.

The protein localises to the cytoplasm. It carries out the reaction a ribonucleoside 5'-triphosphate + H2O = a ribonucleoside 5'-phosphate + diphosphate + H(+). It catalyses the reaction a 2'-deoxyribonucleoside 5'-triphosphate + H2O = a 2'-deoxyribonucleoside 5'-phosphate + diphosphate + H(+). In terms of biological role, nucleoside triphosphate pyrophosphatase. May have a dual role in cell division arrest and in preventing the incorporation of modified nucleotides into cellular nucleic acids. The chain is Nucleoside triphosphate pyrophosphatase from Microcystis aeruginosa (strain NIES-843 / IAM M-2473).